The sequence spans 89 residues: Small ribosomal subunit protein uS14 (89 aa).

It belongs to the universal ribosomal protein uS14 family. As to quaternary structure, part of the 30S ribosomal subunit. Contacts proteins S3 and S10.

Its function is as follows. Binds 16S rRNA, required for the assembly of 30S particles and may also be responsible for determining the conformation of the 16S rRNA at the A site. The chain is Small ribosomal subunit protein uS14 from Chlorobaculum parvum (strain DSM 263 / NCIMB 8327) (Chlorobium vibrioforme subsp. thiosulfatophilum).